The following is a 244-amino-acid chain: Type I iodothyronine deiodinase (244 aa).

The Extracellular segment spans residues Met1–Arg12. A helical; Signal-anchor for type III membrane protein membrane pass occupies residues Leu13–Phe33. At Pro34–Ser244 the chain is on the cytoplasmic side. Residue Sec121 is part of the active site. Residue Sec121 is a non-standard amino acid, selenocysteine.

It belongs to the iodothyronine deiodinase family. Predominantly monomer. Can form homodimers but homodimerization is not essential for enzyme activity.

Its subcellular location is the cell membrane. It localises to the endoplasmic reticulum membrane. It is found in the basolateral cell membrane. The catalysed reaction is 3,3',5-triiodo-L-thyronine + iodide + A + H(+) = L-thyroxine + AH2. The enzyme catalyses 3,3',5'-triiodo-L-thyronine + iodide + A + H(+) = L-thyroxine + AH2. It catalyses the reaction 3,3'-diiodo-L-thyronine + iodide + A + H(+) = 3,3',5'-triiodo-L-thyronine + AH2. It carries out the reaction 3,3'-diiodo-L-thyronine + iodide + A + H(+) = 3,3',5-triiodo-L-thyronine + AH2. The catalysed reaction is 3'-iodo-L-thyronine + iodide + A + H(+) = 3',5'-diiodo-L-thyronine + AH2. The enzyme catalyses 3-iodo-L-thyronine + iodide + A + H(+) = 3,5-diiodo-L-thyronine + AH2. It catalyses the reaction 3-iodo-L-thyronine + iodide + A + H(+) = 3,3'-diiodo-L-thyronine + AH2. It carries out the reaction 3,3'-diiodothyronamine + iodide + A + H(+) = 3,3',5'-triiodothyronamine + AH2. The catalysed reaction is 3'-iodothyronamine + iodide + A + H(+) = 3',5'-diiodothyronamine + AH2. The enzyme catalyses 3-iodothyronamine + iodide + A + H(+) = 3,3'-diiodothyronamine + AH2. It catalyses the reaction 3,3'-diiodothyronamine + iodide + A + H(+) = 3,3',5-triiodothyronamine + AH2. It carries out the reaction 3-iodothyronamine + iodide + A + H(+) = 3,5-diiodothyronamine + AH2. The catalysed reaction is 3,3'-diiodo-L-thyronine sulfate + iodide + A + H(+) = 3,3',5'-triiodo-L-thyronine sulfate + AH2. The enzyme catalyses 3,3',5'-triiodo-L-thyronine sulfate + iodide + A + H(+) = L-thyroxine sulfate + AH2. It catalyses the reaction 3,3'-diiodo-L-thyronine sulfate + iodide + A + H(+) = 3,3',5-triiodo-L-thyronine sulfate + AH2. Its function is as follows. Plays a crucial role in the metabolism of thyroid hormones (TH) and has specific roles in TH activation and inactivation by deiodination. Catalyzes the deiodination of L-thyroxine (T4) to 3,5,3'-triiodothyronine (T3) and 3',5'-diiodothyronine (3',5'-T2) to 3'-monoiodothyronine (3'-T1) via outer-ring deiodination (ORD). Catalyzes the deiodination of T4 to 3,3',5'-triiodothyronine (rT3), T3 to 3,3'-diiodothyronine (3,3'-T2), 3,5-diiodothyronine (3,5-T2) to 3-monoiodothyronine (3-T1) and 3,3'-T2 to 3-T1 via inner-ring deiodination (IRD). Catalyzes the deiodination of rT3 to 3,3'-T2 via ORD. Catalyzes the phenolic ring deiodinations of 3,3',5'-triiodothyronamine, 3',5'-diiodothyronamine and 3,3'-diiodothyronamine as well as tyrosyl ring deiodinations of 3,5,3'-triiodothyronamine and 3,5-diiodothyronamine. Catalyzes the deiodination of L-thyroxine sulfate and 3,3',5-triiodo-L-thyronine sulfate via IRD and of 3,3',5'-triiodo-L-thyronine sulfate via ORD. In Felis catus (Cat), this protein is Type I iodothyronine deiodinase (DIO1).